The following is a 245-amino-acid chain: Ribonuclease PH (245 aa).

Residues Arg-86 and 124 to 126 (GTR) contribute to the phosphate site.

Belongs to the RNase PH family. In terms of assembly, homohexameric ring arranged as a trimer of dimers.

It catalyses the reaction tRNA(n+1) + phosphate = tRNA(n) + a ribonucleoside 5'-diphosphate. Its function is as follows. Phosphorolytic 3'-5' exoribonuclease that plays an important role in tRNA 3'-end maturation. Removes nucleotide residues following the 3'-CCA terminus of tRNAs; can also add nucleotides to the ends of RNA molecules by using nucleoside diphosphates as substrates, but this may not be physiologically important. Probably plays a role in initiation of 16S rRNA degradation (leading to ribosome degradation) during starvation. This is Ribonuclease PH from Bacillus cereus (strain G9842).